The following is a 422-amino-acid chain: F-box/FBD/LRR-repeat protein At5g56420 (422 aa).

One can recognise an F-box domain in the interval 5-54 (RDRLSQLPDDFLLQILSWLPTKDVLVTSLLSKRWRFLWTLVPRLNYDLRL). LRR repeat units follow at residues 59-85 (CPRFSQFVDRSLLLHKAPTLESLNIKI), 136-163 (VLKLENITLEDASCYVCFQSLKTLHLLD), 164-189 (VKYLDDQSLPRIISSCSSLEDLVVQR), 193-212 (DNVKVVTVTAPSLKTLSLHK), 214-238 (SQAFEGDDDGFLIDTPKLKRVDIED), 279-304 (LCLITSDAAYPAGTIFSQLVHLELCT), and 305-330 (CAPRWWDLLTRLIEDSPKLRVLKLRQ). The region spanning 342 to 391 (SWKQPALPKCLLFHLETFKWELYEGSQKQKEVATFILKHAIRLKTAIISP) is the FBD domain.

This chain is F-box/FBD/LRR-repeat protein At5g56420, found in Arabidopsis thaliana (Mouse-ear cress).